Here is a 433-residue protein sequence, read N- to C-terminus: CinA-like protein (433 aa).

It belongs to the CinA family.

The chain is CinA-like protein from Prochlorococcus marinus (strain MIT 9515).